Consider the following 124-residue polypeptide: SPbeta prophage-derived uncharacterized protein YoqO (124 aa).

Transmembrane regions (helical) follow at residues 54-74 and 88-108; these read LVVI…LLSF and VIFI…ISIM.

It localises to the cell membrane. The chain is SPbeta prophage-derived uncharacterized protein YoqO (yoqO) from Bacillus subtilis (strain 168).